The chain runs to 135 residues: DNA-directed RNA polymerase subunit omega (135 aa).

The disordered stretch occupies residues 84 to 106; it reads IAGHSSHVSPSRSSRHTGLGKSF.

The protein belongs to the RNA polymerase subunit omega family. The RNAP catalytic core consists of 2 alpha, 1 beta, 1 beta' and 1 omega subunit. When a sigma factor is associated with the core the holoenzyme is formed, which can initiate transcription.

The catalysed reaction is RNA(n) + a ribonucleoside 5'-triphosphate = RNA(n+1) + diphosphate. In terms of biological role, promotes RNA polymerase assembly. Latches the N- and C-terminal regions of the beta' subunit thereby facilitating its interaction with the beta and alpha subunits. The sequence is that of DNA-directed RNA polymerase subunit omega from Anaplasma phagocytophilum (strain HZ).